Reading from the N-terminus, the 641-residue chain is Soluble starch synthase 1, chloroplastic/amyloplastic (641 aa).

Residues 1 to 113 (MATAAGMGIG…DSIDKTIFVA (113 aa)) constitute a chloroplast transit peptide. Residues 62–96 (TFLVPTSTPPAPTQSPAPAPTPPPLPDSGVGEIEP) are disordered. Positions 68 to 87 (STPPAPTQSPAPAPTPPPLP) are enriched in pro residues. Lys147 is a binding site for ADP-alpha-D-glucose.

This sequence belongs to the glycosyltransferase 1 family. Bacterial/plant glycogen synthase subfamily.

It is found in the plastid. It localises to the chloroplast. Its subcellular location is the amyloplast. The catalysed reaction is [(1-&gt;4)-alpha-D-glucosyl](n) + ADP-alpha-D-glucose = [(1-&gt;4)-alpha-D-glucosyl](n+1) + ADP + H(+). Its pathway is glycan biosynthesis; starch biosynthesis. This chain is Soluble starch synthase 1, chloroplastic/amyloplastic, found in Oryza sativa subsp. indica (Rice).